A 271-amino-acid chain; its full sequence is Magnesium dechelatase SGR2, chloroplastic (271 aa).

The N-terminal 54 residues, 1–54 (MCSLATNLLLPSKMKPVFPEKLSTSSLCVTTRRSKMKNRSIVPVARLFGPAIFE), are a transit peptide targeting the chloroplast.

It belongs to the staygreen family. Interacts with the light harvesting complex II (LHCII). Interacts with the chlorophyll catabolic enzyme (CCE) RCCR.

The protein localises to the plastid. It is found in the chloroplast thylakoid membrane. The enzyme catalyses chlorophyll a + 2 H(+) = pheophytin a + Mg(2+). In terms of biological role, magnesium chelatase involved in chlorophyll a degradation in the chlorophyll-protein complexes of photosystem I (PSI) and photosystem II (PSII). Contributes to the degradation of PSI and PSII in the thylakoid membranes. Required to trigger chlorophyll degradation during natural and dark-induced leaf senescence. Mediates chlorophyll degradation during embryo degreening. Recombinant SGR2 possesses high dechelating activity against chlorophyll a, very low activity against chlorophyllide a, and no activity against chlorophyll b. This Arabidopsis thaliana (Mouse-ear cress) protein is Magnesium dechelatase SGR2, chloroplastic.